Consider the following 413-residue polypeptide: Arginine biosynthesis bifunctional protein ArgJ (413 aa).

Residues Thr163, Lys189, Thr200, Glu286, Asn408, and Thr413 each coordinate substrate. Thr200 acts as the Nucleophile in catalysis.

The protein belongs to the ArgJ family. Heterotetramer of two alpha and two beta chains.

The protein resides in the cytoplasm. The catalysed reaction is N(2)-acetyl-L-ornithine + L-glutamate = N-acetyl-L-glutamate + L-ornithine. The enzyme catalyses L-glutamate + acetyl-CoA = N-acetyl-L-glutamate + CoA + H(+). It functions in the pathway amino-acid biosynthesis; L-arginine biosynthesis; L-ornithine and N-acetyl-L-glutamate from L-glutamate and N(2)-acetyl-L-ornithine (cyclic): step 1/1. It participates in amino-acid biosynthesis; L-arginine biosynthesis; N(2)-acetyl-L-ornithine from L-glutamate: step 1/4. Catalyzes two activities which are involved in the cyclic version of arginine biosynthesis: the synthesis of N-acetylglutamate from glutamate and acetyl-CoA as the acetyl donor, and of ornithine by transacetylation between N(2)-acetylornithine and glutamate. This is Arginine biosynthesis bifunctional protein ArgJ from Staphylococcus aureus (strain COL).